The sequence spans 341 residues: Tryptophan--tRNA ligase (341 aa).

ATP-binding positions include 11–13 and 19–20; these read RPT and GH. Positions 12-20 match the 'HIGH' region motif; sequence PTGKLHIGH. Residue Asp140 coordinates L-tryptophan. Residues 152–154, Leu194, and 202–206 each bind ATP; these read GND and KMSKS. Residues 202–206 carry the 'KMSKS' region motif; the sequence is KMSKS.

The protein belongs to the class-I aminoacyl-tRNA synthetase family. Homodimer.

The protein localises to the cytoplasm. It catalyses the reaction tRNA(Trp) + L-tryptophan + ATP = L-tryptophyl-tRNA(Trp) + AMP + diphosphate + H(+). In terms of biological role, catalyzes the attachment of tryptophan to tRNA(Trp). This chain is Tryptophan--tRNA ligase, found in Lactococcus lactis subsp. lactis (strain IL1403) (Streptococcus lactis).